Consider the following 623-residue polypeptide: Xaa-Pro aminopeptidase 1 (623 aa).

Arg-77 serves as a coordination point for a peptide. Lys-304 bears the N6-acetyllysine mark. His-395 contacts a peptide. Mn(2+) contacts are provided by Asp-415, Asp-426, and His-489. The a peptide site is built by His-489, His-498, and Glu-523. Glu-523 and Glu-537 together coordinate Mn(2+).

This sequence belongs to the peptidase M24B family. In terms of assembly, homodimer. It depends on Mn(2+) as a cofactor.

Its subcellular location is the cytoplasm. The protein localises to the cytosol. It catalyses the reaction Release of any N-terminal amino acid, including proline, that is linked to proline, even from a dipeptide or tripeptide.. Metalloaminopeptidase that catalyzes the removal of a penultimate prolyl residue from the N-termini of peptides, such as Arg-Pro-Pro. Contributes to the degradation of bradykinin. This chain is Xaa-Pro aminopeptidase 1 (XPNPEP1), found in Bos taurus (Bovine).